Reading from the N-terminus, the 307-residue chain is Myeloid-associated differentiation marker-like protein 2 (307 aa).

MARVEL domains lie at 17-154 (AVTS…ARPG) and 159-303 (YMAT…RIRF). The next 7 membrane-spanning stretches (helical) occupy residues 53-73 (FCMAAWGFCFAVSALVVACEF), 90-110 (AFAMLATLLCATAAVLYPLYF), 129-149 (LAASVFAGLLFLAYAVEVALT), 163-183 (VSGLLKIVQAFVACIIFGALV), 198-218 (VAVYSLCFLATVAVVALSVMG), 229-249 (RLVVVYTFLAVLLYLSAAVIW), and 278-298 (LVVAIFTYVNLLLYVVDLAYS).

Belongs to the MAL family.

The protein localises to the membrane. This is Myeloid-associated differentiation marker-like protein 2 (MYADML2) from Homo sapiens (Human).